We begin with the raw amino-acid sequence, 355 residues long: Peptide chain release factor 1 (355 aa).

Gln233 is subject to N5-methylglutamine.

It belongs to the prokaryotic/mitochondrial release factor family. Methylated by PrmC. Methylation increases the termination efficiency of RF1.

The protein localises to the cytoplasm. In terms of biological role, peptide chain release factor 1 directs the termination of translation in response to the peptide chain termination codons UAG and UAA. The chain is Peptide chain release factor 1 from Desulforudis audaxviator (strain MP104C).